Here is a 186-residue protein sequence, read N- to C-terminus: Signal peptidase I P (186 aa).

Over 1 to 15 (MTKEKVFKKKSSILE) the chain is Cytoplasmic. Residues 16-35 (WGKAIVIAVILALLIRNFLF) form a helical membrane-spanning segment. The Extracellular segment spans residues 36–186 (EPYVVEGKSM…FPFSNMRKAK (151 aa)). Residues Ser44 and Lys86 contribute to the active site.

This sequence belongs to the peptidase S26 family.

It is found in the cell membrane. It catalyses the reaction Cleavage of hydrophobic, N-terminal signal or leader sequences from secreted and periplasmic proteins.. The sequence is that of Signal peptidase I P (sipP) from Bacillus subtilis subsp. natto.